We begin with the raw amino-acid sequence, 345 residues long: Biotin synthase (345 aa).

Residues 60–287 (NQVQLSTLLS…RTMVRLSAGR (228 aa)) form the Radical SAM core domain. Positions 75, 79, and 82 each coordinate [4Fe-4S] cluster. The [2Fe-2S] cluster site is built by cysteine 119, cysteine 150, cysteine 210, and arginine 282.

It belongs to the radical SAM superfamily. Biotin synthase family. Homodimer. The cofactor is [4Fe-4S] cluster. [2Fe-2S] cluster serves as cofactor.

The enzyme catalyses (4R,5S)-dethiobiotin + (sulfur carrier)-SH + 2 reduced [2Fe-2S]-[ferredoxin] + 2 S-adenosyl-L-methionine = (sulfur carrier)-H + biotin + 2 5'-deoxyadenosine + 2 L-methionine + 2 oxidized [2Fe-2S]-[ferredoxin]. The protein operates within cofactor biosynthesis; biotin biosynthesis; biotin from 7,8-diaminononanoate: step 2/2. Catalyzes the conversion of dethiobiotin (DTB) to biotin by the insertion of a sulfur atom into dethiobiotin via a radical-based mechanism. In Polaromonas naphthalenivorans (strain CJ2), this protein is Biotin synthase.